Reading from the N-terminus, the 344-residue chain is Sorting nexin-16 (344 aa).

The span at 1–10 shows a compositional bias: pro residues; it reads MATPYVPVPM. Disordered regions lie at residues 1–49 and 83–105; these read MATP…DSSV and SIEYSARPRDTEEQHPDALNWED. Polar residues predominate over residues 14–26; sequence NSASSFTNNRNQR. Residues 27–40 show a composition bias toward low complexity; the sequence is SSSFGSVSTSSNSS. Basic and acidic residues predominate over residues 88–105; the sequence is ARPRDTEEQHPDALNWED. One can recognise a PX domain in the interval 105–218; the sequence is DRPSTPTILG…EFLCLDDPPG (114 aa). Residues Arg144, Thr146, and Arg184 each contribute to the a 1,2-diacyl-sn-glycero-3-phospho-(1D-myo-inositol-3-phosphate) site. Phosphoserine is present on Ser222. Positions 223–278 form a coiled coil; that stretch reads LEESRAFCETLEETNYHLQRELLEKQKEVESLKKLLGEKQLHIDALETRIRTLSLE.

The protein belongs to the sorting nexin family. In terms of assembly, homooligomer. Interacts with EGFR.

Its subcellular location is the early endosome membrane. The protein resides in the late endosome membrane. It localises to the cytoplasm. It is found in the lysosome. Its function is as follows. May be involved in several stages of intracellular trafficking. Plays a role in protein transport from early to late endosomes. Plays a role in protein transport to the lysosome. Promotes degradation of EGFR after EGF signaling. This is Sorting nexin-16 (Snx16) from Rattus norvegicus (Rat).